Reading from the N-terminus, the 1172-residue chain is Thrombospondin-2 (1172 aa).

Positions 1 to 18 are cleaved as a signal peptide; it reads MLWALALLALGIGPRASA. In terms of domain architecture, Laminin G-like spans 19-215; that stretch reads GDHVKDTSFD…LQNVHLVFAD (197 aa). The tract at residues 19 to 232 is heparin-binding; the sequence is GDHVKDTSFD…KKGCQHSQGA (214 aa). 3 N-linked (GlcNAc...) asparagine glycosylation sites follow: Asn-151, Asn-316, and Asn-330. Positions 318-375 constitute a VWFC domain; it reads SACVQEGRIFAENETWVVDSCTTCTCKKFKTVCHQITCSPATCANPSFVEGECCPSCS. 3 TSP type-1 domains span residues 381–431, 437–492, and 494–549; these read DEGW…GKCD, NGGW…DPCP, and DGRW…RSCP. 27 disulfides stabilise this stretch: Cys-393–Cys-425, Cys-397–Cys-430, Cys-408–Cys-415, Cys-449–Cys-486, Cys-453–Cys-491, Cys-464–Cys-476, Cys-506–Cys-543, Cys-510–Cys-548, Cys-521–Cys-533, Cys-553–Cys-564, Cys-558–Cys-574, Cys-577–Cys-588, Cys-594–Cys-610, Cys-601–Cys-619, Cys-622–Cys-646, Cys-652–Cys-665, Cys-659–Cys-678, Cys-680–Cys-691, Cys-707–Cys-715, Cys-720–Cys-740, Cys-756–Cys-776, Cys-779–Cys-799, Cys-815–Cys-835, Cys-838–Cys-858, Cys-876–Cys-896, Cys-912–Cys-932, and Cys-948–Cys-1169. An N-linked (GlcNAc...) asparagine glycan is attached at Asn-457. The EGF-like 1 domain occupies 549 to 589; sequence PIDGCLSNPCFPGAKCNSFPDGSWSCGSCPVGFLGNGTHCE. An N-linked (GlcNAc...) asparagine glycan is attached at Asn-584. An EGF-like 2 domain is found at 648–692; the sequence is PENPCKDKTHSCHKNAECIYLGHFSDPMYKCECQIGYAGDGLICG. TSP type-3 repeat units follow at residues 693 to 728, 729 to 764, 765 to 787, 788 to 823, 824 to 846, 847 to 884, 885 to 920, and 921 to 956; these read EDSD…NSGQ, EDFD…NPRQ, LDYD…NPAQ, IDTD…NTDQ, RDTD…NPDQ, IDQD…NSNQ, ADHD…NPDQ, and EDSD…AITE. Asn-710 carries an N-linked (GlcNAc...) asparagine glycan. Residues 727-752 are disordered; that stretch reads GQEDFDKDGIGDACDEDDDNDGVSDE. Positions 739-749 are enriched in acidic residues; that stretch reads ACDEDDDNDGV. The disordered stretch occupies residues 846-938; it reads QIDQDNDLVG…GDICKDDFDN (93 aa). Residues 847–866 show a composition bias toward acidic residues; that stretch reads IDQDNDLVGDQCDNNEDIDD. Positions 870-884 are enriched in polar residues; it reads QNNQDNCPYISNSNQ. The segment covering 885 to 895 has biased composition (basic and acidic residues); the sequence is ADHDNDGKGDA. Acidic residues predominate over residues 896–905; that stretch reads CDSDDDNDGV. The span at 925–935 shows a compositional bias: basic and acidic residues; it reads GDGRGDICKDD. A Cell attachment site motif is present at residues 928-930; sequence RGD. The region spanning 960 to 1172 is the TSP C-terminal domain; sequence RNFQMVPLDP…SDLKYECRDA (213 aa). Asn-1069 carries N-linked (GlcNAc...) asparagine glycosylation.

This sequence belongs to the thrombospondin family. Homotrimer; disulfide-linked. Can bind to fibrinogen, fibronectin, laminin and type V collagen. Interacts (via the TSP type I repeats) with CD36; the interaction conveys an antiangiogenic effect. Interacts (via the TSP type I repeats) with HRG; the interaction blocks the antiangiogenic effect of THBS2 with CD36. Can bind to fibrinogen, fibronectin, laminin.

Adhesive glycoprotein that mediates cell-to-cell and cell-to-matrix interactions. Ligand for CD36 mediating antiangiogenic properties. The protein is Thrombospondin-2 (Thbs2) of Mus musculus (Mouse).